We begin with the raw amino-acid sequence, 114 residues long: GTTFRTSIAENALVGSYAVVNNKGCMVHPKTPAQDMDEIASLLQVPVVAGTINRGNAAIGSGLVVNDWAAFCGLNTTATEITVVERIFQLRRDLGGGRANLLQQLRDTLVDELA.

Belongs to the eIF-6 family. In terms of assembly, monomer. Associates with the 60S ribosomal subunit.

The protein resides in the cytoplasm. It is found in the nucleus. Its subcellular location is the nucleolus. Its function is as follows. Binds to the 60S ribosomal subunit and prevents its association with the 40S ribosomal subunit to form the 80S initiation complex in the cytoplasm. May also be involved in ribosome biogenesis. The polypeptide is Eukaryotic translation initiation factor 6 (Trypanosoma cruzi).